The following is a 756-amino-acid chain: Cholesterol uptake protein 1 (756 aa).

A signal peptide spans 1–18; sequence MRTSQAIFILIFLDSVRN. Over 19–268 the chain is Extracellular; sequence QSPQVIPAKW…TIESSMKIFD (250 aa). N-linked (GlcNAc...) asparagine glycosylation is found at Asn-39 and Asn-63. A Cholesterol-binding sequence motif motif is present at residues 124 to 129; it reads VHYNFR. N-linked (GlcNAc...) asparagine glycosylation is found at Asn-140, Asn-174, and Asn-257. The helical transmembrane segment at 269 to 289 threads the bilayer; it reads YTIPIVFWACILLLVTIVVFV. At 290–373 the chain is on the cytoplasmic side; sequence YHYFDGIWER…YEERELKYDV (84 aa). Residues 374–394 form a helical membrane-spanning segment; sequence YKIALAIIGIFYNITVLQLII. The Extracellular portion of the chain corresponds to 395–421; that stretch reads SKAGSLRQSGDLDECTFNFQCARPLWY. A helical membrane pass occupies residues 422–442; that stretch reads FVAFNNVVSNGGYVYFGTLII. The Cytoplasmic portion of the chain corresponds to 443 to 473; that stretch reads VMNYCRERSFRRLFAVQPTLAERYGLPQHSG. A helical transmembrane segment spans residues 474–494; that stretch reads LMTAIGLAVIMEGISSATYHV. The Extracellular portion of the chain corresponds to 495–498; that stretch reads CPNN. A helical membrane pass occupies residues 499 to 517; it reads INYQFDTALMYVIGMLGKL. The Cytoplasmic portion of the chain corresponds to 518-530; that stretch reads KIWSLRHPDMVVS. Residues 531–551 traverse the membrane as a helical segment; the sequence is AYHAFGFLGVFLMAAIAGVYV. At 552 to 554 the chain is on the extracellular side; that stretch reads HNM. A helical membrane pass occupies residues 555–575; it reads IFWALFSIIYIASMLLVSLEF. Residues 570–578 carry the Cholesterol-binding sequence motif motif; it reads LVSLEFYFK. Residues 576–612 lie on the Cytoplasmic side of the membrane; that stretch reads YFKGIWTLNLRELRNSIRLSWVSSRHLSCVVPAYKAR. The helical transmembrane segment at 613 to 633 threads the bilayer; the sequence is FFVILLLNIANTAVVVYGLEA. Residues 634-637 are Extracellular-facing; sequence HPKD. A helical transmembrane segment spans residues 638-658; sequence FLSFLLIPFIGNLFIYIIYYI. Over 659–671 the chain is Cytoplasmic; the sequence is LMKMIYREKIPKR. A helical membrane pass occupies residues 672-692; it reads AIALLFAAVISWTCAGILFNQ. Residues 693–728 lie on the Extracellular side of the membrane; the sequence is RVSDWSKMPAISRELNKPCIFLNFYDNHDLWHLSSA. The chain crosses the membrane as a helical span at residues 729-749; that stretch reads FAIFFSFTAINVIDDDLMFVM. Over 750 to 756 the chain is Cytoplasmic; that stretch reads RNTIRVF.

It belongs to the SID1 family. Highly expressed along the intestine with expression also detected in the pharynx, especially at the terminal bulb, and in the excretory gland cells.

The protein resides in the cell membrane. The enzyme catalyses cholesterol(in) = cholesterol(out). Its function is as follows. Cholesterol-binding protein which is involved in dietary cholesterol uptake from the environment. Does not play a role in double-stranded RNA transport in contrast to other SID1 family members. This is Cholesterol uptake protein 1 from Caenorhabditis elegans.